A 552-amino-acid polypeptide reads, in one-letter code: Putative transport protein HSM_0534 (552 aa).

Helical transmembrane passes span 4 to 24 (IAIT…IGHW), 28 to 48 (GVGL…HFMN), 67 to 87 (LILF…ASLL), 95 to 115 (GLAT…YKVV), and 157 to 177 (MAYA…MWLI). 2 consecutive RCK C-terminal domains span residues 190 to 275 (KQFQ…VIGE) and 277 to 360 (IDMP…IIGN). A run of 6 helical transmembrane segments spans residues 370–390 (MLPV…PFYI), 402–424 (AGGP…LYWF), 438–458 (IVLF…DTLV), 463–483 (LEWM…TGII), 495–515 (LCGL…ANAI), and 529–549 (VYPL…ILLW).

It belongs to the AAE transporter (TC 2.A.81) family. YidE subfamily.

The protein localises to the cell membrane. The polypeptide is Putative transport protein HSM_0534 (Histophilus somni (strain 2336) (Haemophilus somnus)).